Reading from the N-terminus, the 189-residue chain is dCTP deaminase (189 aa).

Residues 112–117, 136–138, Gln-157, Tyr-171, and Gln-181 contribute to the dCTP site; these read KSTYAR and TLE. Glu-138 functions as the Proton donor/acceptor in the catalytic mechanism.

Belongs to the dCTP deaminase family. As to quaternary structure, homotrimer.

It catalyses the reaction dCTP + H2O + H(+) = dUTP + NH4(+). Its pathway is pyrimidine metabolism; dUMP biosynthesis; dUMP from dCTP (dUTP route): step 1/2. Functionally, catalyzes the deamination of dCTP to dUTP. The polypeptide is dCTP deaminase (Nitrosospira multiformis (strain ATCC 25196 / NCIMB 11849 / C 71)).